We begin with the raw amino-acid sequence, 397 residues long: Tryptophan synthase beta chain (397 aa).

At Lys-86 the chain carries N6-(pyridoxal phosphate)lysine.

It belongs to the TrpB family. Tetramer of two alpha and two beta chains. Pyridoxal 5'-phosphate serves as cofactor.

It carries out the reaction (1S,2R)-1-C-(indol-3-yl)glycerol 3-phosphate + L-serine = D-glyceraldehyde 3-phosphate + L-tryptophan + H2O. The protein operates within amino-acid biosynthesis; L-tryptophan biosynthesis; L-tryptophan from chorismate: step 5/5. The beta subunit is responsible for the synthesis of L-tryptophan from indole and L-serine. The chain is Tryptophan synthase beta chain from Edwardsiella ictaluri (strain 93-146).